Here is a 218-residue protein sequence, read N- to C-terminus: Putative transposase InsD for insertion element IS2E (218 aa).

One can recognise an Integrase catalytic domain in the interval 23–206; sequence KPAVPPSKRA…SPREYLRQRA (184 aa).

In terms of biological role, involved in the transposition of the insertion sequence IS2. The sequence is that of Putative transposase InsD for insertion element IS2E (insD8) from Escherichia coli (strain K12).